The chain runs to 318 residues: Protoheme IX farnesyltransferase (318 aa).

The next 9 helical transmembrane spans lie at 33–53 (VMSL…VSVH), 54–74 (PFIG…SGAL), 102–122 (GEAL…LALA), 125–145 (VLAG…YTMW), 154–174 (IVIG…AATG), 181–201 (WLMF…LALF), 225–245 (VHIL…AFSN), 246–266 (IGGP…LLGA), and 288–308 (FFKL…AEAL).

It belongs to the UbiA prenyltransferase family. Protoheme IX farnesyltransferase subfamily. Interacts with CtaA.

The protein resides in the cell inner membrane. The enzyme catalyses heme b + (2E,6E)-farnesyl diphosphate + H2O = Fe(II)-heme o + diphosphate. The protein operates within porphyrin-containing compound metabolism; heme O biosynthesis; heme O from protoheme: step 1/1. In terms of biological role, converts heme B (protoheme IX) to heme O by substitution of the vinyl group on carbon 2 of heme B porphyrin ring with a hydroxyethyl farnesyl side group. This chain is Protoheme IX farnesyltransferase, found in Ruegeria pomeroyi (strain ATCC 700808 / DSM 15171 / DSS-3) (Silicibacter pomeroyi).